Consider the following 861-residue polypeptide: Probable alpha,alpha-trehalose-phosphate synthase [UDP-forming] 10 (861 aa).

At Ser5 the chain carries Phosphoserine. A Phosphothreonine modification is found at Thr32. Residues 59 to 546 (ERKIIVANFL…ARSFSQDLER (488 aa)) are glycosyltransferase.

The protein in the N-terminal section; belongs to the glycosyltransferase 20 family. In the C-terminal section; belongs to the trehalose phosphatase family.

The enzyme catalyses D-glucose 6-phosphate + UDP-alpha-D-glucose = alpha,alpha-trehalose 6-phosphate + UDP + H(+). This chain is Probable alpha,alpha-trehalose-phosphate synthase [UDP-forming] 10 (TPS10), found in Arabidopsis thaliana (Mouse-ear cress).